A 301-amino-acid chain; its full sequence is Thioredoxin-related transmembrane protein 2-A (301 aa).

An N-terminal signal peptide occupies residues 1–19 (MSLIRGLISTIYYLPKIYK). Over 20–111 (WFYRPYYFLS…VVLFFRVDLR (92 aa)) the chain is Extracellular. A helical transmembrane segment spans residues 112 to 132 (FGLLYLTLCVVFLITCKPPAY). Residues 122–269 (VFLITCKPPA…IFQKYKKFSK (148 aa)) form the Thioredoxin domain. At 133–301 (MGPENIKYFR…EEDSESKKDK (169 aa)) the chain is on the cytoplasmic side. The interval 268-301 (SKGEKPEEPQPVLEEESESPLEEEEEDSESKKDK) is disordered. Residues 280 to 295 (LEEESESPLEEEEEDS) show a composition bias toward acidic residues. The Di-lysine motif signature appears at 298–301 (KKDK).

As to quaternary structure, monomer. Homodimer; disulfide-linked. Occurs in both reduced and oxidized monomeric form. Oxidative conditions increase homodimerization.

The protein localises to the endoplasmic reticulum membrane. Its subcellular location is the mitochondrion membrane. Functionally, endoplasmic reticulum and mitochondria-associated protein that probably functions as a regulator of cellular redox state and thereby regulates protein post-translational modification, protein folding and mitochondrial activity. The polypeptide is Thioredoxin-related transmembrane protein 2-A (Danio rerio (Zebrafish)).